Consider the following 217-residue polypeptide: Adenylate kinase (217 aa).

12–17 is an ATP binding site; that stretch reads GAGKGS. Residues 32–61 form an NMP region; the sequence is STGDMFRTHIKGSTPLGLEAKKYTDQGLLV. Residues T33, R38, 59–61, 87–90, and Q94 contribute to the AMP site; these read LLV and GYPR. The segment at 128 to 165 is LID; the sequence is GRRTCPVCGAIYHVDNYPPKVAGICDNDGATLVQRKDD. R129 contributes to the ATP binding site. Residues C132 and C135 each coordinate Zn(2+). 138–139 is an ATP binding site; that stretch reads IY. 2 residues coordinate Zn(2+): C152 and D155. AMP-binding residues include R162 and R173. Q201 lines the ATP pocket.

This sequence belongs to the adenylate kinase family. In terms of assembly, monomer.

The protein localises to the cytoplasm. The enzyme catalyses AMP + ATP = 2 ADP. Its pathway is purine metabolism; AMP biosynthesis via salvage pathway; AMP from ADP: step 1/1. Its function is as follows. Catalyzes the reversible transfer of the terminal phosphate group between ATP and AMP. Plays an important role in cellular energy homeostasis and in adenine nucleotide metabolism. The chain is Adenylate kinase from Acholeplasma laidlawii (strain PG-8A).